A 247-amino-acid polypeptide reads, in one-letter code: Triosephosphate isomerase (247 aa).

The substrate site is built by Asn10 and Lys12. The active-site Electrophile is His94. The active-site Proton acceptor is Glu164.

Belongs to the triosephosphate isomerase family. In terms of assembly, homodimer.

It carries out the reaction D-glyceraldehyde 3-phosphate = dihydroxyacetone phosphate. Its pathway is carbohydrate biosynthesis; gluconeogenesis. It functions in the pathway carbohydrate degradation; glycolysis; D-glyceraldehyde 3-phosphate from glycerone phosphate: step 1/1. This chain is Triosephosphate isomerase (Tpi), found in Drosophila simulans (Fruit fly).